A 915-amino-acid chain; its full sequence is Protein translocase subunit SecA (915 aa).

ATP-binding positions include glutamine 87, 105-109, and aspartate 512; that span reads GEGKT. Positions 849 to 864 are enriched in low complexity; it reads AAQQQARQAPLPNAPA. Residues 849-915 form a disordered region; sequence AAQQQARQAP…CHGSRAKDHA (67 aa). Basic and acidic residues predominate over residues 876–891; the sequence is PEEKVARVAAERHIGR. Positions 895, 897, 906, and 907 each coordinate Zn(2+).

Belongs to the SecA family. Monomer and homodimer. Part of the essential Sec protein translocation apparatus which comprises SecA, SecYEG and auxiliary proteins SecDF-YajC and YidC. The cofactor is Zn(2+).

The protein resides in the cell inner membrane. It is found in the cytoplasm. It catalyses the reaction ATP + H2O + cellular proteinSide 1 = ADP + phosphate + cellular proteinSide 2.. Part of the Sec protein translocase complex. Interacts with the SecYEG preprotein conducting channel. Has a central role in coupling the hydrolysis of ATP to the transfer of proteins into and across the cell membrane, serving both as a receptor for the preprotein-SecB complex and as an ATP-driven molecular motor driving the stepwise translocation of polypeptide chains across the membrane. This Actinobacillus succinogenes (strain ATCC 55618 / DSM 22257 / CCUG 43843 / 130Z) protein is Protein translocase subunit SecA.